The primary structure comprises 308 residues: Mitoferrin (308 aa).

A run of 6 helical transmembrane segments spans residues 13 to 29 (GGSF…AGFA), 69 to 89 (ITGL…SHAV), 111 to 131 (IKVG…ASPM), 168 to 184 (YTTT…VYFA), 213 to 233 (LVAG…FDVV), and 285 to 302 (MVFH…YEYF). Solcar repeat units follow at residues 14–100 (GSFY…LKFK), 108–192 (HHPI…LKKI), and 207–305 (YQLI…FKFI).

Belongs to the mitochondrial carrier (TC 2.A.29) family.

The protein localises to the mitochondrion inner membrane. Functionally, mitochondrial solute carriers shuttle metabolites, nucleotides, and cofactors through the mitochondrial inner membrane. Mitochondrial iron transporter that mediates iron uptake. Probably required for heme synthesis of hemoproteins and Fe-S cluster assembly. This is Mitoferrin (mcfF) from Dictyostelium discoideum (Social amoeba).